A 198-amino-acid polypeptide reads, in one-letter code: MEHYISLFVRAVFVENMALAFFLGMCTFLAVSKKVSTAFGLGIAVTVVLGISVPANNLVYNLVLRDGALVEGVDLSFLNFITFIGVIAAIVQVLEMILDRYFPALYNALGIFLPLITVNCAIFGGVSFMAQRDYNFPESIVYGFGSGIGWMLAIVALAGIREKMKYANVPAGLQGLGITFITTGLMALGFMSFSGVNL.

6 helical membrane-spanning segments follow: residues 11-31, 35-55, 77-97, 109-129, 140-160, and 176-196; these read AVFVENMALAFFLGMCTFLAV, VSTAFGLGIAVTVVLGISVPA, FLNFITFIGVIAAIVQVLEMI, LGIFLPLITVNCAIFGGVSFM, IVYGFGSGIGWMLAIVALAGI, and LGITFITTGLMALGFMSFSGV.

This sequence belongs to the NqrDE/RnfAE family. As to quaternary structure, composed of six subunits; NqrA, NqrB, NqrC, NqrD, NqrE and NqrF.

It localises to the cell inner membrane. It carries out the reaction a ubiquinone + n Na(+)(in) + NADH + H(+) = a ubiquinol + n Na(+)(out) + NAD(+). NQR complex catalyzes the reduction of ubiquinone-1 to ubiquinol by two successive reactions, coupled with the transport of Na(+) ions from the cytoplasm to the periplasm. NqrA to NqrE are probably involved in the second step, the conversion of ubisemiquinone to ubiquinol. This Yersinia enterocolitica serotype O:8 / biotype 1B (strain NCTC 13174 / 8081) protein is Na(+)-translocating NADH-quinone reductase subunit E.